We begin with the raw amino-acid sequence, 381 residues long: Homoserine O-succinyltransferase (381 aa).

One can recognise an AB hydrolase-1 domain in the interval 45 to 360; it reads NAVLVCHALN…PHGHDAFLLD (316 aa). Ser-151 functions as the Nucleophile in the catalytic mechanism. Arg-221 contacts substrate. Active-site residues include Asp-321 and His-354. Asp-355 lines the substrate pocket.

Belongs to the AB hydrolase superfamily. MetX family. Homodimer.

The protein resides in the cytoplasm. The catalysed reaction is L-homoserine + succinyl-CoA = O-succinyl-L-homoserine + CoA. The protein operates within amino-acid biosynthesis; L-methionine biosynthesis via de novo pathway; O-succinyl-L-homoserine from L-homoserine: step 1/1. In terms of biological role, transfers a succinyl group from succinyl-CoA to L-homoserine, forming succinyl-L-homoserine. The polypeptide is Homoserine O-succinyltransferase (Burkholderia cenocepacia (strain HI2424)).